A 481-amino-acid polypeptide reads, in one-letter code: Phenylalanine--tRNA ligase alpha subunit (481 aa).

L-phenylalanine is bound by residues threonine 322, 361-363, and tyrosine 401; that span reads QLE. A Mg(2+)-binding site is contributed by glutamate 403. Residue phenylalanine 426 participates in L-phenylalanine binding.

It belongs to the class-II aminoacyl-tRNA synthetase family. Phe-tRNA synthetase alpha subunit type 2 subfamily. In terms of assembly, tetramer of two alpha and two beta subunits. Requires Mg(2+) as cofactor.

Its subcellular location is the cytoplasm. It carries out the reaction tRNA(Phe) + L-phenylalanine + ATP = L-phenylalanyl-tRNA(Phe) + AMP + diphosphate + H(+). This chain is Phenylalanine--tRNA ligase alpha subunit, found in Methanoculleus marisnigri (strain ATCC 35101 / DSM 1498 / JR1).